The sequence spans 124 residues: Fluoride-specific ion channel FluC (124 aa).

The next 4 helical transmembrane spans lie at 4–24 (LLLVALGGSIGAVFRYLISIF), 35–55 (FGTLLVNVLGSFLMGVIYALG), 60–80 (ISPELKALIGVGLLGALTTFS), and 102–122 (VVLNLSLCLFMVYLGQQLVFS). The Na(+) site is built by glycine 74 and threonine 77.

It belongs to the fluoride channel Fluc/FEX (TC 1.A.43) family.

The protein resides in the cell inner membrane. It catalyses the reaction fluoride(in) = fluoride(out). Na(+) is not transported, but it plays an essential structural role and its presence is essential for fluoride channel function. Functionally, fluoride-specific ion channel. Important for reducing fluoride concentration in the cell, thus reducing its toxicity. The polypeptide is Fluoride-specific ion channel FluC (Shewanella sp. (strain ANA-3)).